A 426-amino-acid chain; its full sequence is METFCLKVTFWVALVGYVIGDHPESYSTNLSTPVDFTTFHGTELSFLVTTHRPTNLALPSNGSMHSYCPQQTKITSAFKYINTVISCTIFIVGMVGNATLLRIIYQNKCMRNGPNALIASLALGDLIYVVIDLPINVFKLLAGRWPFDHNDFGVFLCKLFPFLQKSSVGITVLNLCALSVDRYRAVASWSRVQGIGIPLITAIEIVSIWILSFILAIPEAIGFVMVPFEYKGEQHKTCMLNATSKFMEFYQDVKDWWLFGFYFCMPLVCTAIFYTLMTCEMLNRRNGSLRIALSEHLKQRREVAKTVFCLVVIFALCWFPLHLSRILKKTVYDEMDKNRCELLSFLRLMDYIGINLATMNSCINPIALYFVSKKFKNCFQSCLCCCCYQSKSLMTSVPMNGTSIQWKNHEQNNHNTERSSHKDSIN.

A signal peptide spans 1–20; that stretch reads METFCLKVTFWVALVGYVIG. Residues 21–79 are Extracellular-facing; the sequence is DHPESYSTNLSTPVDFTTFHGTELSFLVTTHRPTNLALPSNGSMHSYCPQQTKITSAFK. Asn29 and Asn61 each carry an N-linked (GlcNAc...) asparagine glycan. The helical transmembrane segment at 80-101 threads the bilayer; that stretch reads YINTVISCTIFIVGMVGNATLL. The Cytoplasmic segment spans residues 102 to 111; the sequence is RIIYQNKCMR. A helical membrane pass occupies residues 112 to 131; that stretch reads NGPNALIASLALGDLIYVVI. Topologically, residues 132-158 are extracellular; sequence DLPINVFKLLAGRWPFDHNDFGVFLCK. Cysteines 157 and 238 form a disulfide. Residues 159–180 traverse the membrane as a helical segment; that stretch reads LFPFLQKSSVGITVLNLCALSV. The Cytoplasmic portion of the chain corresponds to 181–204; that stretch reads DRYRAVASWSRVQGIGIPLITAIE. The chain crosses the membrane as a helical span at residues 205-228; it reads IVSIWILSFILAIPEAIGFVMVPF. Topologically, residues 229 to 255 are extracellular; that stretch reads EYKGEQHKTCMLNATSKFMEFYQDVKD. N-linked (GlcNAc...) asparagine glycosylation occurs at Asn241. Residues 256-277 traverse the membrane as a helical segment; sequence WWLFGFYFCMPLVCTAIFYTLM. At 278 to 305 the chain is on the cytoplasmic side; the sequence is TCEMLNRRNGSLRIALSEHLKQRREVAK. The chain crosses the membrane as a helical span at residues 306–327; it reads TVFCLVVIFALCWFPLHLSRIL. The Extracellular segment spans residues 328–346; it reads KKTVYDEMDKNRCELLSFL. The helical transmembrane segment at 347–371 threads the bilayer; it reads RLMDYIGINLATMNSCINPIALYFV. Over 372–426 the chain is Cytoplasmic; sequence SKKFKNCFQSCLCCCCYQSKSLMTSVPMNGTSIQWKNHEQNNHNTERSSHKDSIN. Residue Ser424 is modified to Phosphoserine.

Belongs to the G-protein coupled receptor 1 family. Endothelin receptor subfamily. EDNRA sub-subfamily. As to quaternary structure, interacts with HDAC7 and KAT5.

The protein localises to the cell membrane. In terms of biological role, receptor for endothelin-1. Mediates its action by association with G proteins that activate a phosphatidylinositol-calcium second messenger system. The rank order of binding affinities for ET-A is: ET1 &gt; ET2 &gt;&gt; ET3. The chain is Endothelin-1 receptor from Canis lupus familiaris (Dog).